Consider the following 338-residue polypeptide: Formamidase (338 aa).

In terms of domain architecture, CN hydrolase spans 15 to 257 (VVIGLAQLAL…DEIVCCELRP (243 aa)). The Proton acceptor role is filled by Glu-61. Catalysis depends on Lys-130, which acts as the Proton donor. Cys-163 functions as the Nucleophile in the catalytic mechanism.

This sequence belongs to the carbon-nitrogen hydrolase superfamily. Aliphatic amidase family.

The enzyme catalyses formamide + H2O = formate + NH4(+). Its function is as follows. Is an aliphatic amidase with a restricted substrate specificity, as it only hydrolyzes formamide. In Pseudomonas syringae pv. tomato (strain ATCC BAA-871 / DC3000), this protein is Formamidase.